Consider the following 65-residue polypeptide: Large ribosomal subunit protein bL35 (65 aa).

Residues 1 to 22 (MPKIKTVRGAAKRFKKTGKGGF) form a disordered region. Over residues 10–22 (AAKRFKKTGKGGF) the composition is skewed to basic residues.

Belongs to the bacterial ribosomal protein bL35 family.

The protein is Large ribosomal subunit protein bL35 of Escherichia coli O127:H6 (strain E2348/69 / EPEC).